The sequence spans 329 residues: Phosphate acyltransferase (329 aa).

Belongs to the PlsX family. In terms of assembly, homodimer. Probably interacts with PlsY.

The protein localises to the cytoplasm. It carries out the reaction a fatty acyl-[ACP] + phosphate = an acyl phosphate + holo-[ACP]. It functions in the pathway lipid metabolism; phospholipid metabolism. Its function is as follows. Catalyzes the reversible formation of acyl-phosphate (acyl-PO(4)) from acyl-[acyl-carrier-protein] (acyl-ACP). This enzyme utilizes acyl-ACP as fatty acyl donor, but not acyl-CoA. The polypeptide is Phosphate acyltransferase (Campylobacter fetus subsp. fetus (strain 82-40)).